A 639-amino-acid chain; its full sequence is Poly(A)-specific ribonuclease PARN (639 aa).

A divalent metal cation is bound by residues Asp-28 and Glu-30. Ser-163 and Ser-167 each carry phosphoserine. Residues Lys-178–Asp-245 enclose the R3H domain. Lys-220 carries the post-translational modification N6-acetyllysine. Positions 292 and 382 each coordinate a divalent metal cation. Residue Lys-499 is modified to N6-acetyllysine. At Ser-530 the chain carries Phosphoserine. Phosphoserine; by MAPKAPK2 is present on Ser-557. The segment at Ala-560–Trp-639 is disordered. Phosphoserine occurs at positions 583 and 587. The span at Lys-606–Lys-615 shows a compositional bias: basic residues. Residues Ser-619, Ser-623, and Ser-628 each carry the phosphoserine modification. At Thr-631 the chain carries Phosphothreonine.

It belongs to the CAF1 family. As to quaternary structure, homodimer. Found in a mRNA decay complex with RENT1, RENT2 and RENT3B. Interacts with KHSRP. Interacts with CELF1/CUGBP1. Interacts with ZC3HAV1 in an RNA-independent manner. Interacts with DHX36. It depends on Mg(2+) as a cofactor. Post-translationally, phosphorylation by MAPKAPK2, preventing GADD45A mRNA degradation after genotoxic stress. As to expression, ubiquitous.

The protein resides in the nucleus. The protein localises to the cytoplasm. It localises to the nucleolus. The enzyme catalyses Exonucleolytic cleavage of poly(A) to 5'-AMP.. 3'-exoribonuclease that has a preference for poly(A) tails of mRNAs, thereby efficiently degrading poly(A) tails. Exonucleolytic degradation of the poly(A) tail is often the first step in the decay of eukaryotic mRNAs and is also used to silence certain maternal mRNAs translationally during oocyte maturation and early embryonic development. Interacts with both the 3'-end poly(A) tail and the 5'-end cap structure during degradation, the interaction with the cap structure being required for an efficient degradation of poly(A) tails. Involved in nonsense-mediated mRNA decay, a critical process of selective degradation of mRNAs that contain premature stop codons. Also involved in degradation of inherently unstable mRNAs that contain AU-rich elements (AREs) in their 3'-UTR, possibly via its interaction with KHSRP. Probably mediates the removal of poly(A) tails of AREs mRNAs, which constitutes the first step of destabilization. Also able to recognize and trim poly(A) tails of microRNAs such as MIR21 and H/ACA box snoRNAs (small nucleolar RNAs) leading to microRNAs degradation or snoRNA increased stability. In Homo sapiens (Human), this protein is Poly(A)-specific ribonuclease PARN (PARN).